We begin with the raw amino-acid sequence, 608 residues long: UvrABC system protein C (608 aa).

The 79-residue stretch at 13–91 folds into the GIY-YIG domain; sequence HKPGVYIMHD…IKKNSPKYNI (79 aa). The UVR domain maps to 202–237; that stretch reads DELTKKLTDKMMAASKNLNFELAAKLRDSITNIQVI.

Belongs to the UvrC family. As to quaternary structure, interacts with UvrB in an incision complex.

The protein localises to the cytoplasm. The UvrABC repair system catalyzes the recognition and processing of DNA lesions. UvrC both incises the 5' and 3' sides of the lesion. The N-terminal half is responsible for the 3' incision and the C-terminal half is responsible for the 5' incision. The chain is UvrABC system protein C from Finegoldia magna (strain ATCC 29328 / DSM 20472 / WAL 2508) (Peptostreptococcus magnus).